We begin with the raw amino-acid sequence, 81 residues long: Alpha-toxin Ac1 (81 aa).

An N-terminal signal peptide occupies residues 1 to 17 (YIVMISLALVVMIGVES). In terms of domain architecture, LCN-type CS-alpha/beta spans 19-80 (RDGYIVYPNN…PIKDPSQKCT (62 aa)). Disulfide bonds link C29/C79, C33/C51, C37/C61, and C41/C63.

The protein belongs to the long (4 C-C) scorpion toxin superfamily. Sodium channel inhibitor family. Alpha subfamily. Expressed by the venom gland.

The protein resides in the secreted. In terms of biological role, alpha toxins bind voltage-independently at site-3 of sodium channels (Nav) and inhibit the inactivation of the activated channels, thereby blocking neuronal transmission. The chain is Alpha-toxin Ac1 from Androctonus crassicauda (Arabian fat-tailed scorpion).